A 186-amino-acid chain; its full sequence is PRA1 family protein G2 (186 aa).

The next 4 helical transmembrane spans lie at 66-86 (YFFV…LITA), 87-107 (SPVA…FHFF), 119-139 (VGDR…IWFT), and 142-162 (AVNL…HAVF).

This sequence belongs to the PRA1 family. Expressed in roots and trichomes.

It localises to the endoplasmic reticulum membrane. In terms of biological role, may be involved in both secretory and endocytic intracellular trafficking in the endosomal/prevacuolar compartments. In Arabidopsis thaliana (Mouse-ear cress), this protein is PRA1 family protein G2 (PRA1G2).